Here is a 581-residue protein sequence, read N- to C-terminus: MAAAAMAVSEAWPELELAERERRRELLLTGPGLEERVKAAGGRLPPRLFTLPLLHYLEVSGCGSLRAPGPGLAQGLPQLHSLVLRRNALGPGLSPELGPLPALRVLDLSGNALETLPPGEGLGPAEPPGLPQLQSLNLSGNRLRELPADLARCAPRLQSLNLTGNRLDAFPPELFRPGALPLLSELAAADNCLRELSPDIAHLASLKTLDLSNNQLTEIPAELADCPKLKEINFRGNRLRDKRLEKMVGGCQTKSILEYLRAGGRGGRSKGRQEASEKEDRKKRRERKQHRESGEGEEEVADSARLMLKVLHVSENPTPLTVRVSPEVKDVRPYIVGAIVRGMDLQPGNALRRFLNSQTKLHDDLCEKRTAATIATHDLQAVRGPLLYAARPPEDLKIVPLGRKEAKAKELVRQLQLEAEEQRKQKKRQSVSGLHRYLHLLDGKENYPCLVDAEGDVISFPPITNSEKTKIKKTTCNLFLEVTSATSLQLCKDIMDSLILRMAELSKSTSENKEEDMLSGTEADAGCGLSDPNLTLSSGKDGQCPLVVEQVRVVDLEGSLKVVYPSKTDLITLPPHVTVVR.

LRR repeat units follow at residues Gln78 to Leu97, Ala102 to Gly123, Gln132 to Ala154, Arg156 to Pro177, Leu182 to Ala204, Ser205 to Pro227, and Lys228 to Val248. A disordered region spans residues Ala262–Ala301. Basic and acidic residues predominate over residues Gly271 to Asp280. 3 positions are modified to phosphoserine: Ser314, Ser430, and Ser519. Residues Leu401–Arg436 adopt a coiled-coil conformation.

The polypeptide is Leucine-rich repeat-containing protein 47 (Lrrc47) (Mus musculus (Mouse)).